The chain runs to 141 residues: MLMPKRVKYRKQQRGTVRGMTKGASLVHFGDWGLKAMESSWITAQQIEACRLSMVRTLKRTGNIWINIFPDKPITSKGIGTRQGKGKGDVEGWVAVVKKGRVMFEIGGVDEATAKRALEYAASKLPIRTKIVQRYEIGGEL.

The protein belongs to the universal ribosomal protein uL16 family. As to quaternary structure, part of the 50S ribosomal subunit.

Functionally, binds 23S rRNA and is also seen to make contacts with the A and possibly P site tRNAs. The protein is Large ribosomal subunit protein uL16 of Petrotoga mobilis (strain DSM 10674 / SJ95).